Reading from the N-terminus, the 391-residue chain is Metallophosphoesterase 1 (391 aa).

The chain crosses the membrane as a helical span at residues 25 to 45; that stretch reads TVVIISVLLFCEYFIYHLVIF. 6 residues coordinate a divalent metal cation: aspartate 72, aspartate 114, asparagine 152, histidine 244, histidine 298, and histidine 300. Residues 352–372 traverse the membrane as a helical segment; sequence VLATYGAAAVFLVVLILAHLE.

This sequence belongs to the metallophosphoesterase superfamily. MPPE1 family. Interacts with GPI-anchor proteins (via the GPI portion). Interacts with TMED10. Mn(2+) serves as cofactor.

Its subcellular location is the endoplasmic reticulum-Golgi intermediate compartment membrane. Its function is as follows. Metallophosphoesterase that catalyzes the removal of a side-chain ethanolamine-phosphate (EtNP) from the second mannose of the GPI-anchor protein intermediate. Participates in the glycan remodeling steps of GPI-anchor maturation to allow an efficient transport of GPI-anchor proteins from the endoplasmic reticulum to the Golgi. In Cricetulus griseus (Chinese hamster), this protein is Metallophosphoesterase 1.